Reading from the N-terminus, the 549-residue chain is Glucose-6-phosphate isomerase (549 aa).

Residues Lys-80, Lys-228, and Lys-234 each carry the N6-acetyllysine modification. Catalysis depends on Glu-355, which acts as the Proton donor. Catalysis depends on residues His-386 and Lys-514.

The protein belongs to the GPI family.

It is found in the cytoplasm. The catalysed reaction is alpha-D-glucose 6-phosphate = beta-D-fructose 6-phosphate. It functions in the pathway carbohydrate biosynthesis; gluconeogenesis. The protein operates within carbohydrate degradation; glycolysis; D-glyceraldehyde 3-phosphate and glycerone phosphate from D-glucose: step 2/4. In terms of biological role, catalyzes the reversible isomerization of glucose-6-phosphate to fructose-6-phosphate. In Shigella boydii serotype 4 (strain Sb227), this protein is Glucose-6-phosphate isomerase.